The primary structure comprises 442 residues: Thymidine phosphorylase (442 aa).

This sequence belongs to the thymidine/pyrimidine-nucleoside phosphorylase family. Homodimer.

It catalyses the reaction thymidine + phosphate = 2-deoxy-alpha-D-ribose 1-phosphate + thymine. It participates in pyrimidine metabolism; dTMP biosynthesis via salvage pathway; dTMP from thymine: step 1/2. In terms of biological role, the enzymes which catalyze the reversible phosphorolysis of pyrimidine nucleosides are involved in the degradation of these compounds and in their utilization as carbon and energy sources, or in the rescue of pyrimidine bases for nucleotide synthesis. The sequence is that of Thymidine phosphorylase from Pectobacterium atrosepticum (strain SCRI 1043 / ATCC BAA-672) (Erwinia carotovora subsp. atroseptica).